The following is a 355-amino-acid chain: Uroporphyrinogen decarboxylase (355 aa).

Substrate is bound by residues 27–31, Asp77, Tyr154, Thr209, and His327; that span reads RQAGR.

It belongs to the uroporphyrinogen decarboxylase family. Homodimer.

Its subcellular location is the cytoplasm. It carries out the reaction uroporphyrinogen III + 4 H(+) = coproporphyrinogen III + 4 CO2. Its pathway is porphyrin-containing compound metabolism; protoporphyrin-IX biosynthesis; coproporphyrinogen-III from 5-aminolevulinate: step 4/4. Functionally, catalyzes the decarboxylation of four acetate groups of uroporphyrinogen-III to yield coproporphyrinogen-III. The sequence is that of Uroporphyrinogen decarboxylase from Erwinia tasmaniensis (strain DSM 17950 / CFBP 7177 / CIP 109463 / NCPPB 4357 / Et1/99).